Consider the following 373-residue polypeptide: Protein-glutamate methylesterase/protein-glutamine glutaminase 2 (373 aa).

Residues 4 to 121 (KVLVVDDSGF…SRNPEKVKQL (118 aa)) enclose the Response regulatory domain. D55 carries the 4-aspartylphosphate modification. Residues 136 to 181 (FSSYSAPAPQPASAPAPAPSSFASSRSPAPAPAPARAAAPAASANS) are disordered. The span at 143 to 153 (APQPASAPAPA) shows a compositional bias: pro residues. The span at 154–181 (PSSFASSRSPAPAPAPARAAAPAASANS) shows a compositional bias: low complexity. The 189-residue stretch at 182–370 (PAPKRKAYKL…LDDIGRHLVE (189 aa)) folds into the CheB-type methylesterase domain. Active-site residues include S197, H224, and D317.

The protein belongs to the CheB family. Phosphorylated by CheA. Phosphorylation of the N-terminal regulatory domain activates the methylesterase activity.

It is found in the cytoplasm. It catalyses the reaction [protein]-L-glutamate 5-O-methyl ester + H2O = L-glutamyl-[protein] + methanol + H(+). The enzyme catalyses L-glutaminyl-[protein] + H2O = L-glutamyl-[protein] + NH4(+). In terms of biological role, involved in chemotaxis. Part of a chemotaxis signal transduction system that modulates chemotaxis in response to various stimuli. Catalyzes the demethylation of specific methylglutamate residues introduced into the chemoreceptors (methyl-accepting chemotaxis proteins or MCP) by CheR. Also mediates the irreversible deamidation of specific glutamine residues to glutamic acid. The polypeptide is Protein-glutamate methylesterase/protein-glutamine glutaminase 2 (Pseudomonas fluorescens (strain ATCC BAA-477 / NRRL B-23932 / Pf-5)).